Reading from the N-terminus, the 244-residue chain is Adenosylcobinamide-GDP ribazoletransferase (244 aa).

The next 5 helical transmembrane spans lie at 31-51 (LLCYPLVGLLFGLLLWLASHL), 55-75 (APAPLHAALLLTLWVLLSGAL), 109-129 (IAVVTLVLVLLLKFCALWVLV), 133-153 (AGALLVLAPVVGRAAMLGLFL), and 188-208 (LLLGGWSAIWPMALALGVFLW).

This sequence belongs to the CobS family. The cofactor is Mg(2+).

The protein resides in the cell inner membrane. It catalyses the reaction alpha-ribazole + adenosylcob(III)inamide-GDP = adenosylcob(III)alamin + GMP + H(+). It carries out the reaction alpha-ribazole 5'-phosphate + adenosylcob(III)inamide-GDP = adenosylcob(III)alamin 5'-phosphate + GMP + H(+). Its pathway is cofactor biosynthesis; adenosylcobalamin biosynthesis; adenosylcobalamin from cob(II)yrinate a,c-diamide: step 7/7. Functionally, joins adenosylcobinamide-GDP and alpha-ribazole to generate adenosylcobalamin (Ado-cobalamin). Also synthesizes adenosylcobalamin 5'-phosphate from adenosylcobinamide-GDP and alpha-ribazole 5'-phosphate. This Pseudomonas putida (strain W619) protein is Adenosylcobinamide-GDP ribazoletransferase.